A 316-amino-acid chain; its full sequence is Olfactory receptor 5P79 (316 aa).

Residues 1 to 28 are Extracellular-facing; it reads MGILKDGNHTAVTEFILLGLTDDPVLKV. N8 carries N-linked (GlcNAc...) asparagine glycosylation. A helical membrane pass occupies residues 29-49; the sequence is VLFTIILCIYLVTVSGNLSTI. The Cytoplasmic portion of the chain corresponds to 50–57; sequence LLIRVSSQ. Residues 58–78 form a helical membrane-spanning segment; it reads LHHPMYFFLSHLASVDIGISS. At 79–102 the chain is on the extracellular side; it reads SVTPNMLVNFLLERSTISYLGCGI. The cysteines at positions 100 and 192 are disulfide-linked. A helical membrane pass occupies residues 103-123; sequence QLGSGAFFGSTESFLLAAMAY. The Cytoplasmic portion of the chain corresponds to 124–136; that stretch reads DHFMAICNPLLYS. The chain crosses the membrane as a helical span at residues 137 to 157; the sequence is TKMSTQVCIQLLVGSYIGGFL. Topologically, residues 158-199 are extracellular; the sequence is NASSFILSFFSFLFCGPNKVNHFFCDFTPLVELSCSDNSVLL. Residues 200–220 traverse the membrane as a helical segment; sequence ILDSFSAGSIIVITVLVIAIS. Residues 221 to 240 are Cytoplasmic-facing; the sequence is YTYILITILKMHSTEGRHKA. A helical membrane pass occupies residues 241-261; sequence FSTCTSHLTAVTVFYGTVTFI. At 262-274 the chain is on the extracellular side; it reads YVMPKSSYSTDQN. A helical transmembrane segment spans residues 275 to 297; sequence KVLSVFYMIAIAIPMLNPLIYSL. Residues 298–316 are Cytoplasmic-facing; it reads RNNEIKNALKRQLSKKTFS.

The protein belongs to the G-protein coupled receptor 1 family.

Its subcellular location is the cell membrane. Functionally, potential odorant receptor. The protein is Olfactory receptor 5P79 of Mus musculus (Mouse).